A 157-amino-acid polypeptide reads, in one-letter code: SsrA-binding protein (157 aa).

It belongs to the SmpB family.

Its subcellular location is the cytoplasm. Its function is as follows. Required for rescue of stalled ribosomes mediated by trans-translation. Binds to transfer-messenger RNA (tmRNA), required for stable association of tmRNA with ribosomes. tmRNA and SmpB together mimic tRNA shape, replacing the anticodon stem-loop with SmpB. tmRNA is encoded by the ssrA gene; the 2 termini fold to resemble tRNA(Ala) and it encodes a 'tag peptide', a short internal open reading frame. During trans-translation Ala-aminoacylated tmRNA acts like a tRNA, entering the A-site of stalled ribosomes, displacing the stalled mRNA. The ribosome then switches to translate the ORF on the tmRNA; the nascent peptide is terminated with the 'tag peptide' encoded by the tmRNA and targeted for degradation. The ribosome is freed to recommence translation, which seems to be the essential function of trans-translation. In Aquifex aeolicus (strain VF5), this protein is SsrA-binding protein.